The following is a 377-amino-acid chain: Oleosin-B4 (377 aa).

The polar stretch occupies residues 1–37 (MRNEIQNETAQTDQTQGSMFSFFNLFPFLLPMFEVIK). The next 3 membrane-spanning stretches (helical) occupy residues 16–36 (QGSM…FEVI), 38–58 (MVVA…TLSG), and 69–89 (LFII…VLAA). A hydrophobic region spans residues 38–133 (MVVASVASVV…IIPESIKPSN (96 aa)). A run of 3 repeats spans residues 115–124 (IPESIKPSNI), 125–134 (IPESIKPSNI), and 135–144 (IPEGIKPSNI). Residues 115–144 (IPESIKPSNIIPESIKPSNIIPEGIKPSNI) form a 3 X 10 AA tandem repeats of I-P-E-[SG]-I-K-P-S-N-[IV] region. The tract at residues 158-377 (KIKAKKEEKS…SSHGSGGKHI (220 aa)) is disordered. Composition is skewed to basic and acidic residues over residues 162 to 185 (KKEE…KGED) and 195 to 231 (DEDK…EGKH). The stretch at 196–202 (EDKHGSG) is one 2-1 repeat. A 2.1 repeat occupies 196–202 (EDKHGSG). Residues 196 to 222 (EDKHGSGAKHGKGESKHGKGESTHGKG) are 3 X 6 AA tandem repeats of E-[SD]-[KT]-H-G-[KS]-G. A 2-2; truncated repeat occupies 204-208 (KHGKG). Repeat copies occupy residues 209 to 215 (ESKHGKG), 216 to 222 (ESTHGKG), 230 to 247 (KHGS…GSGG), 260 to 277 (KHES…GSEG), 278 to 295 (KHGS…GSGG), 296 to 313 (KHES…GSGG), and 355 to 359 (SSDGS). A 4 X 18 AA tandem repeats of K-H-E-S-G-G-[SA]-[PSA]-M-G-G-G-K-H-G-S-[GE]-G region spans residues 230–313 (KHGSGGSSMG…MGGGKHGSGG (84 aa)). Residues 232–244 (GSGGSSMGGGKHG) show a composition bias toward gly residues. Basic and acidic residues predominate over residues 247-263 (GKHETGGKHGSGGKHES). Composition is skewed to gly residues over residues 280 to 292 (GSGG…GKHG) and 302 to 314 (SAMG…SGGK). Positions 350 to 369 (SSTSESSDGSSDGSSSDGSS) are enriched in low complexity. The segment at 355-368 (SSDGSSDGSSSDGS) is 3 X 5 AA tandem repeats of S-S-D-G-S. The 4-2; truncated repeat unit spans residues 360–363 (SDGS). The 4-3 repeat unit spans residues 364 to 368 (SSDGS).

Belongs to the oleosin family. The full-length protein is found in the tapetal lipid bodies of immature anthers, the proteolytically cleaved C-terminal product is found on the coats of pollen grains. No expression is detected in other flower organs, siliques or seedlings.

It localises to the lipid droplet. Its subcellular location is the membrane. Many of the major pollen coat proteins are derived from endoproteolytic cleavage of oleosin-like proteins. This Brassica napus (Rape) protein is Oleosin-B4.